We begin with the raw amino-acid sequence, 622 residues long: Phosphomethylpyrimidine synthase (622 aa).

Substrate-binding positions include N226, M255, Y284, H320, 340 to 342, 381 to 384, and E420; these read SRG and DGLR. Zn(2+) is bound at residue H424. Y447 serves as a coordination point for substrate. Zn(2+) is bound at residue H488. 3 residues coordinate [4Fe-4S] cluster: C568, C571, and C576.

This sequence belongs to the ThiC family. Homodimer. It depends on [4Fe-4S] cluster as a cofactor.

The catalysed reaction is 5-amino-1-(5-phospho-beta-D-ribosyl)imidazole + S-adenosyl-L-methionine = 4-amino-2-methyl-5-(phosphooxymethyl)pyrimidine + CO + 5'-deoxyadenosine + formate + L-methionine + 3 H(+). Its pathway is cofactor biosynthesis; thiamine diphosphate biosynthesis. In terms of biological role, catalyzes the synthesis of the hydroxymethylpyrimidine phosphate (HMP-P) moiety of thiamine from aminoimidazole ribotide (AIR) in a radical S-adenosyl-L-methionine (SAM)-dependent reaction. The sequence is that of Phosphomethylpyrimidine synthase from Ruthia magnifica subsp. Calyptogena magnifica.